A 524-amino-acid chain; its full sequence is Bifunctional purine biosynthesis protein PurH (524 aa).

The region spanning 1–149 is the MGS-like domain; that stretch reads MSDPLIKRAL…KNNESVTVLT (149 aa).

This sequence belongs to the PurH family.

It carries out the reaction (6R)-10-formyltetrahydrofolate + 5-amino-1-(5-phospho-beta-D-ribosyl)imidazole-4-carboxamide = 5-formamido-1-(5-phospho-D-ribosyl)imidazole-4-carboxamide + (6S)-5,6,7,8-tetrahydrofolate. It catalyses the reaction IMP + H2O = 5-formamido-1-(5-phospho-D-ribosyl)imidazole-4-carboxamide. It participates in purine metabolism; IMP biosynthesis via de novo pathway; 5-formamido-1-(5-phospho-D-ribosyl)imidazole-4-carboxamide from 5-amino-1-(5-phospho-D-ribosyl)imidazole-4-carboxamide (10-formyl THF route): step 1/1. Its pathway is purine metabolism; IMP biosynthesis via de novo pathway; IMP from 5-formamido-1-(5-phospho-D-ribosyl)imidazole-4-carboxamide: step 1/1. The protein is Bifunctional purine biosynthesis protein PurH of Chlorobium phaeovibrioides (strain DSM 265 / 1930) (Prosthecochloris vibrioformis (strain DSM 265)).